The chain runs to 330 residues: Aspartate--ammonia ligase (330 aa).

Belongs to the class-II aminoacyl-tRNA synthetase family. AsnA subfamily.

The protein resides in the cytoplasm. The enzyme catalyses L-aspartate + NH4(+) + ATP = L-asparagine + AMP + diphosphate + H(+). The protein operates within amino-acid biosynthesis; L-asparagine biosynthesis; L-asparagine from L-aspartate (ammonia route): step 1/1. The protein is Aspartate--ammonia ligase of Streptococcus thermophilus (strain ATCC BAA-250 / LMG 18311).